The primary structure comprises 326 residues: Aspartate carbamoyltransferase catalytic subunit (326 aa).

Positions 65 and 66 each coordinate carbamoyl phosphate. Lys93 contributes to the L-aspartate binding site. Carbamoyl phosphate is bound by residues Arg115, His143, and Gln146. L-aspartate-binding residues include Arg176 and Arg230. Gly271 and Pro272 together coordinate carbamoyl phosphate.

The protein belongs to the aspartate/ornithine carbamoyltransferase superfamily. ATCase family. As to quaternary structure, heterododecamer (2C3:3R2) of six catalytic PyrB chains organized as two trimers (C3), and six regulatory PyrI chains organized as three dimers (R2).

It carries out the reaction carbamoyl phosphate + L-aspartate = N-carbamoyl-L-aspartate + phosphate + H(+). The protein operates within pyrimidine metabolism; UMP biosynthesis via de novo pathway; (S)-dihydroorotate from bicarbonate: step 2/3. Functionally, catalyzes the condensation of carbamoyl phosphate and aspartate to form carbamoyl aspartate and inorganic phosphate, the committed step in the de novo pyrimidine nucleotide biosynthesis pathway. The chain is Aspartate carbamoyltransferase catalytic subunit from Mesorhizobium japonicum (strain LMG 29417 / CECT 9101 / MAFF 303099) (Mesorhizobium loti (strain MAFF 303099)).